Here is a 537-residue protein sequence, read N- to C-terminus: Di/tripeptide-binding protein 1 (537 aa).

The N-terminal stretch at 1 to 29 (MRRNAVIRSAIMPSLLGAALVAAVPQAFA) is a signal peptide.

Belongs to the bacterial solute-binding protein 5 family. As to quaternary structure, the complex is composed of two ATP-binding proteins (DppD and DppF), two transmembrane proteins (DppB and DppC) and a solute-binding protein (DppA1). Five orthologous SBPs (DppA1-A5) are present in P.aeruginosa, which increases the substrate specificity of the DppBCDF transporter.

Part of the ABC transporter DppABCDF involved in the uptake of various di/tripeptides. Prefers dipeptides with acidic residues at the C-terminal end. Involved in the uptake of phaseolotoxin, a toxic tripeptide inhibiting the enzyme ornithine carbamoyltransferase. This is Di/tripeptide-binding protein 1 from Pseudomonas aeruginosa (strain UCBPP-PA14).